Here is a 54-residue protein sequence, read N- to C-terminus: MRFQPLFWVFFIFAMSLLFITEEKSVNFPRRRKLYRHNCFRRRCISLHSRVPFP.

The first 25 residues, 1-25 (MRFQPLFWVFFIFAMSLLFITEEKS), serve as a signal peptide directing secretion.

Belongs to the Elabela/Toddler family. Interacts with APLNR.

It localises to the secreted. The protein resides in the extracellular space. Peptide hormone that functions as endogenous ligand for the G-protein-coupled apelin receptor (APLNR/APJ), that plays a role in the regulation of normal cardiovascular function and fluid homeostasis. Functions as a balanced agonist activating both G(i) protein pathway and beta-arrestin pathway of APLNR. Downstream G proteins activation, apelin can inhibit cAMP production and activate key intracellular effectors such as ERKs. On the other hand, APLNR activation induces beta-arrestin recruitment to the membrane leading to desensitization and internalization of the receptor. Required for mesendodermal differentiation, blood vessels formation and heart morphogenesis during early development and for adult cardiovascular homeostasis. Acts as a motogen by promoting mesendodermal cell migration during gastrulation by binding and activating APLNR. Acts as an early embryonic regulator of cellular movement with a role in migration and development of cardiac progenitor cells. May act as a chemoattractant for the activation of angioblast migration toward the embryonic midline, i.e. the position of the future vessel formation, during vasculogenesis. Positively regulates sinus venosus (SV)-derived endothelial cells migration into the developing heart to promote coronary blood vessel sprouting. Plays a role in placental vascular development; promotes placental trophoblast invasion and spiral artery remodeling in the uterus. Involved in the regulation of maternal cardiovascular homeostasis to prevent gestational hypertension and for potent cardioprotective functions during heart failure. Mediates myocardial contractility in an ERK1/2-dependent manner. The polypeptide is Apelin receptor early endogenous ligand (Rattus norvegicus (Rat)).